Here is a 282-residue protein sequence, read N- to C-terminus: MEIILAKRAGFCFGVKRATQMAFEAAEKEGKTYSLGPIIHSPQVVHRLEEMGVKVLKGLGEITDGTIIVRSHGVTSEELEEAVRKELEVVDATCPFVKKAQENVQNLSEAGYEVVVVGDADHPEVQGIVSYAKGKVCVVGSEEEAARLPKMKKIGIVAQTTQSFDNLKHVVLECLRKGAEIRIFNTICDATAVRQQEATALARTVDCMIVIGGYNSANTKRLAEVCAELQPRTHQIETAQEINPAWFEGVAKVGVTAGASTPKWLIDEVIERIREIDSAKTS.

Cysteine 12 provides a ligand contact to [4Fe-4S] cluster. Residues histidine 40 and histidine 72 each coordinate (2E)-4-hydroxy-3-methylbut-2-enyl diphosphate. Histidine 40 and histidine 72 together coordinate dimethylallyl diphosphate. Isopentenyl diphosphate contacts are provided by histidine 40 and histidine 72. Residue cysteine 94 coordinates [4Fe-4S] cluster. Position 122 (histidine 122) interacts with (2E)-4-hydroxy-3-methylbut-2-enyl diphosphate. Histidine 122 provides a ligand contact to dimethylallyl diphosphate. Residue histidine 122 coordinates isopentenyl diphosphate. The Proton donor role is filled by glutamate 124. (2E)-4-hydroxy-3-methylbut-2-enyl diphosphate is bound at residue threonine 160. Cysteine 188 contacts [4Fe-4S] cluster. Serine 216, asparagine 218, and serine 260 together coordinate (2E)-4-hydroxy-3-methylbut-2-enyl diphosphate. Dimethylallyl diphosphate contacts are provided by serine 216, asparagine 218, and serine 260. Serine 216, asparagine 218, and serine 260 together coordinate isopentenyl diphosphate.

Belongs to the IspH family. [4Fe-4S] cluster is required as a cofactor.

The enzyme catalyses isopentenyl diphosphate + 2 oxidized [2Fe-2S]-[ferredoxin] + H2O = (2E)-4-hydroxy-3-methylbut-2-enyl diphosphate + 2 reduced [2Fe-2S]-[ferredoxin] + 2 H(+). It catalyses the reaction dimethylallyl diphosphate + 2 oxidized [2Fe-2S]-[ferredoxin] + H2O = (2E)-4-hydroxy-3-methylbut-2-enyl diphosphate + 2 reduced [2Fe-2S]-[ferredoxin] + 2 H(+). It functions in the pathway isoprenoid biosynthesis; dimethylallyl diphosphate biosynthesis; dimethylallyl diphosphate from (2E)-4-hydroxy-3-methylbutenyl diphosphate: step 1/1. Its pathway is isoprenoid biosynthesis; isopentenyl diphosphate biosynthesis via DXP pathway; isopentenyl diphosphate from 1-deoxy-D-xylulose 5-phosphate: step 6/6. Its function is as follows. Catalyzes the conversion of 1-hydroxy-2-methyl-2-(E)-butenyl 4-diphosphate (HMBPP) into a mixture of isopentenyl diphosphate (IPP) and dimethylallyl diphosphate (DMAPP). Acts in the terminal step of the DOXP/MEP pathway for isoprenoid precursor biosynthesis. This chain is 4-hydroxy-3-methylbut-2-enyl diphosphate reductase, found in Geobacter metallireducens (strain ATCC 53774 / DSM 7210 / GS-15).